A 1065-amino-acid polypeptide reads, in one-letter code: Presequence protease, mitochondrial (1065 aa).

The N-terminal 42 residues, 1 to 42 (MLRSFSGAGKCKCRIPVSRQPVCGRSLRISSTLTPWNQSRRA), are a transit peptide targeting the mitochondrion. Residue H117 participates in Zn(2+) binding. The active-site Proton acceptor is the E120. H121 contributes to the Zn(2+) binding site. E193 is a catalytic residue. E230 contributes to the Zn(2+) binding site.

This sequence belongs to the peptidase M16 family. PreP subfamily. As to quaternary structure, monomer and homodimer; homodimerization is induced by binding of the substrate. The cofactor is Zn(2+).

It is found in the mitochondrion intermembrane space. It localises to the mitochondrion matrix. In terms of biological role, degrades mitochondrial transit peptides after their cleavage in the intermembrane space or in the matrix, and presequence peptides; clearance of these peptides is required to keep the presequence processing machinery running. Preferentially cleaves the N-terminal side of paired basic amino acid residues. Also degrades other unstructured peptides. May function as an ATP-dependent peptidase as opposed to a metalloendopeptidase. This Aspergillus fumigatus (strain ATCC MYA-4609 / CBS 101355 / FGSC A1100 / Af293) (Neosartorya fumigata) protein is Presequence protease, mitochondrial (cym1).